A 204-amino-acid chain; its full sequence is LexA repressor (204 aa).

A DNA-binding region (H-T-H motif) is located at residues 30–50 (IREICQGVGLSSPSTVHHHLK). Active-site for autocatalytic cleavage activity residues include S125 and K162.

It belongs to the peptidase S24 family. Homodimer.

It carries out the reaction Hydrolysis of Ala-|-Gly bond in repressor LexA.. Represses a number of genes involved in the response to DNA damage (SOS response), including recA and lexA. In the presence of single-stranded DNA, RecA interacts with LexA causing an autocatalytic cleavage which disrupts the DNA-binding part of LexA, leading to derepression of the SOS regulon and eventually DNA repair. The polypeptide is LexA repressor (Carboxydothermus hydrogenoformans (strain ATCC BAA-161 / DSM 6008 / Z-2901)).